Reading from the N-terminus, the 75-residue chain is Protein Tlp homolog (75 aa).

This sequence belongs to the Tlp family.

The chain is Protein Tlp homolog from Clostridium acetobutylicum (strain ATCC 824 / DSM 792 / JCM 1419 / IAM 19013 / LMG 5710 / NBRC 13948 / NRRL B-527 / VKM B-1787 / 2291 / W).